The following is a 214-amino-acid chain: Single-pass membrane and coiled-coil domain-containing protein 1 (214 aa).

Residues 6 to 42 are a coiled coil; sequence TTLISLKEAMKRVDHKLQALETQFKELDFTKDNLMQK. A helical transmembrane segment spans residues 65-81; the sequence is ALQLTSMELNILYSYVI.

The protein resides in the membrane. The chain is Single-pass membrane and coiled-coil domain-containing protein 1 (SMCO1) from Homo sapiens (Human).